Here is an 89-residue protein sequence, read N- to C-terminus: Small ribosomal subunit protein uS15 (89 aa).

It belongs to the universal ribosomal protein uS15 family. In terms of assembly, part of the 30S ribosomal subunit. Forms a bridge to the 50S subunit in the 70S ribosome, contacting the 23S rRNA.

In terms of biological role, one of the primary rRNA binding proteins, it binds directly to 16S rRNA where it helps nucleate assembly of the platform of the 30S subunit by binding and bridging several RNA helices of the 16S rRNA. Forms an intersubunit bridge (bridge B4) with the 23S rRNA of the 50S subunit in the ribosome. The sequence is that of Small ribosomal subunit protein uS15 from Synechococcus elongatus (strain ATCC 33912 / PCC 7942 / FACHB-805) (Anacystis nidulans R2).